The following is an 868-amino-acid chain: Cytosolic phospholipase A2 epsilon (868 aa).

The disordered stretch occupies residues 1 to 46 (MSLQASEGCPGLGTNVFVPQSPQTDEEGSRSGRSFSEFEDTQDLDT). The region spanning 46–170 (TPGLPPFCPM…CFRKKTHVKF (125 aa)) is the C2 domain. Asp-84, Asp-90, Asp-140, Asp-142, and Asp-148 together coordinate Ca(2+). The PLA2c domain occupies 324–856 (PCPETLDVRL…TLLQALRLAV (533 aa)). Ser-412 acts as the Nucleophile in catalysis. Asp-700 serves as the catalytic Proton acceptor. Residue Ser-800 is modified to Phosphoserine. A required for localization at membrane structures region spans residues 857 to 868 (EKKKRLKGQCPS).

The cofactor is Ca(2+).

It localises to the cytoplasm. It is found in the cytosol. The protein localises to the early endosome membrane. The protein resides in the lysosome membrane. Its subcellular location is the cell membrane. The enzyme catalyses a 1,2-diacyl-sn-glycero-3-phosphoethanolamine + a 1,2-diacyl-sn-glycero-3-phosphocholine = an N-acyl-1,2-diacyl-sn-glycero-3-phosphoethanolamine + a 2-acyl-sn-glycero-3-phosphocholine + H(+). It catalyses the reaction 1-hexadecanoyl-2-octadecanoyl-sn-glycero-3-phosphocholine + 1,2-di-(9Z-octadecenoyl)-sn-glycero-3-phosphoethanolamine = 2-octadecanoyl-sn-glycero-3-phosphocholine + N-hexadecanoyl-1,2-di-(9Z-octadecenoyl)-sn-glycero-3-phosphoethanolamine + H(+). It carries out the reaction 1-octadecanoyl-2-hexadecanoyl-sn-glycero-3-phosphocholine + 1,2-di-(9Z-octadecenoyl)-sn-glycero-3-phosphoethanolamine = N-octadecanoyl-1,2-di-(9Z-octadecenoyl)-sn-glycero-3-phosphoethanolamine + 2-hexadecanoyl-sn-glycero-3-phosphocholine + H(+). The catalysed reaction is 1,2-di-(9Z-octadecenoyl)-sn-glycero-3-phosphoethanolamine + 1,2-dihexadecanoyl-sn-glycero-3-phosphocholine = N-hexadecanoyl-1,2-di-(9Z-octadecenoyl)-sn-glycero-3-phosphoethanolamine + 2-hexadecanoyl-sn-glycero-3-phosphocholine + H(+). The enzyme catalyses 1,2-di-(5Z,8Z,11Z,14Z-eicosatetraenoyl)-sn-glycero-3-phosphocholine + 1,2-di-(9Z-octadecenoyl)-sn-glycero-3-phosphoethanolamine = N-(5Z,8Z,11Z,14Z-eicosatetraenoyl)-1,2-di-(9Z-octadecenoyl)-sn-glycero-3-phosphoethanolamine + 2-(5Z,8Z,11Z,14Z)-eicosatetraenoyl-sn-glycero-3-phosphocholine + H(+). It catalyses the reaction 2 1,2-di-(9Z-octadecenoyl)-sn-glycero-3-phosphoethanolamine = N,1,2-tri-(9Z-octadecenoyl)-sn-glycero-3-phosphoethanolamine + 2-(9Z-octadecenoyl)-sn-glycero-3-phosphoethanolamine + H(+). It carries out the reaction 1-(1Z-octadecenyl)-2-(9Z-octadecenoyl)-sn-glycero-3-phosphoethanolamine + 1,2-dihexadecanoyl-sn-glycero-3-phosphocholine = 1-O-(1Z-octadecenoyl)-2-(9Z-octadecenoyl)-sn-glycero-3-phospho-N-hexadecanoyl-ethanolamine + 2-hexadecanoyl-sn-glycero-3-phosphocholine + H(+). The catalysed reaction is a 1,2-diacyl-sn-glycero-3-phosphocholine + H2O = a 1-acyl-sn-glycero-3-phosphocholine + a fatty acid + H(+). The enzyme catalyses 1-hexadecanoyl-2-(5Z,8Z,11Z,14Z-eicosatetraenoyl)-sn-glycero-3-phosphocholine + H2O = 1-hexadecanoyl-sn-glycero-3-phosphocholine + (5Z,8Z,11Z,14Z)-eicosatetraenoate + H(+). It catalyses the reaction 1-hexadecanoyl-sn-glycero-3-phosphocholine + H2O = sn-glycerol 3-phosphocholine + hexadecanoate + H(+). Stimulated by cytosolic Ca(2+). Stimulated by anionic phospholipids such as phosphatidylserines, phosphatidates and phosphatidylinositols. Its function is as follows. Calcium-dependent N-acyltransferase involved in the biosynthesis of N-acyl ethanolamines (NAEs) in the brain. Transfers the sn-1 fatty acyl chain of phosphatidylcholine (fatty acyl donor) to the amine group of phosphatidylethanolamine (fatty acyl acceptor) to generate N-acyl phosphatidylethanolamine (NAPE). Similarly can use plasmenylethanolamine as a fatty acyl acceptor to form N-acyl plasmenylethanolamine (N-Acyl-PlsEt). Both NAPE and N-Acyl-PlsEt can serve as precursors of bioactive NAEs like N-arachidonoyl phosphatidylethanolamine also called anandamide. Has weak phospholipase A2 and lysophospholipase activities. Regulates intracellular membrane trafficking that requires modulation of membrane curvature as it occurs by enrichment in lysophospholipids. Promotes tubule formation involved in clathrin-independent endocytotic trafficking and cargo recycling. This is Cytosolic phospholipase A2 epsilon from Homo sapiens (Human).